Consider the following 168-residue polypeptide: GPI-anchored protein LLG1 (168 aa).

The signal sequence occupies residues 1 to 23; sequence MELLSRALFFFLLLSVLSSFSSS. The N-linked (GlcNAc...) asparagine glycan is linked to asparagine 57. The GPI-anchor amidated asparagine moiety is linked to residue asparagine 144. The propeptide at 145-168 is removed in mature form; the sequence is AATTSSSRLWLTVSAALLVFVKLF.

Interacts with FER. As to expression, expressed in pollen, pollen tubes, sporophytic pistil tissues, in the early stages of female gametophyte development, and in unfertilized, mature ovules. Expressed in roots, lateral roots, shoots, cotyledons, petioles, developing leaves and anther filaments.

Its subcellular location is the cell membrane. Functionally, component of the FER-regulated Rho GTPase signaling complex. Acts as a chaperone and coreceptor for FER. Required for localization of FER to the plasma membrane. This chain is GPI-anchored protein LLG1, found in Arabidopsis thaliana (Mouse-ear cress).